A 186-amino-acid chain; its full sequence is Peptide deformylase (186 aa).

C99 and H141 together coordinate Fe cation. Residue E142 is part of the active site. Residue H145 coordinates Fe cation.

It belongs to the polypeptide deformylase family. It depends on Fe(2+) as a cofactor.

The enzyme catalyses N-terminal N-formyl-L-methionyl-[peptide] + H2O = N-terminal L-methionyl-[peptide] + formate. Removes the formyl group from the N-terminal Met of newly synthesized proteins. Requires at least a dipeptide for an efficient rate of reaction. N-terminal L-methionine is a prerequisite for activity but the enzyme has broad specificity at other positions. The polypeptide is Peptide deformylase (Chlamydia felis (strain Fe/C-56) (Chlamydophila felis)).